We begin with the raw amino-acid sequence, 152 residues long: CASP-like protein 5C3 (152 aa).

Topologically, residues 1 to 17 (MVEVPGSVGTTASLSLR) are cytoplasmic. Residues 18–38 (LGQMVLAFGSLLFMTIGVRFY) traverse the membrane as a helical segment. At 39–42 (QFTA) the chain is on the extracellular side. The chain crosses the membrane as a helical span at residues 43-63 (FCYLVTIMSLAIPWNLTLAMV). Residues 64-78 (DIYCVILQQPFQKPR) lie on the Cytoplasmic side of the membrane. Residues 79–99 (ILLAISIGDWVVSVLALASAS) form a helical membrane-spanning segment. At 100–128 (SAASVVDILRSNESSCPPTICNRYQFAAT) the chain is on the extracellular side. The N-linked (GlcNAc...) asparagine glycan is linked to N111. Residues 129-149 (LAFLTWFLSLSSSLFNLWLLP) form a helical membrane-spanning segment. The Cytoplasmic portion of the chain corresponds to 150-152 (SLI).

The protein belongs to the Casparian strip membrane proteins (CASP) family. As to quaternary structure, homodimer and heterodimers. In terms of tissue distribution, expressed in the floral organ abscission zone and flower buds.

The protein localises to the cell membrane. The chain is CASP-like protein 5C3 from Arabidopsis thaliana (Mouse-ear cress).